The primary structure comprises 396 residues: Phosphoglycerate kinase (396 aa).

Substrate-binding positions include 21–23, Arg36, 59–62, Arg118, and Arg151; these read DLN and HFGR. Residues Lys201, Glu323, and 353 to 356 contribute to the ATP site; that span reads GGDT.

The protein belongs to the phosphoglycerate kinase family. In terms of assembly, monomer.

Its subcellular location is the cytoplasm. It catalyses the reaction (2R)-3-phosphoglycerate + ATP = (2R)-3-phospho-glyceroyl phosphate + ADP. It functions in the pathway carbohydrate degradation; glycolysis; pyruvate from D-glyceraldehyde 3-phosphate: step 2/5. This is Phosphoglycerate kinase from Brucella abortus biovar 1 (strain 9-941).